The following is a 304-amino-acid chain: Glutaminase (304 aa).

Positions 63, 114, 158, 165, 189, 240, and 258 each coordinate substrate.

It belongs to the glutaminase family. As to quaternary structure, homotetramer.

It catalyses the reaction L-glutamine + H2O = L-glutamate + NH4(+). The sequence is that of Glutaminase from Shewanella baltica (strain OS185).